A 194-amino-acid chain; its full sequence is Putative manganese efflux pump MntP (194 aa).

6 helical membrane-spanning segments follow: residues Pro-3–Gly-23, Leu-37–Leu-57, Asp-69–Leu-89, Leu-110–Phe-132, Cys-147–Gly-167, and Met-172–Gly-192.

Belongs to the MntP (TC 9.B.29) family.

It localises to the cell inner membrane. Probably functions as a manganese efflux pump. The chain is Putative manganese efflux pump MntP from Xanthomonas axonopodis pv. citri (strain 306).